Here is a 405-residue protein sequence, read N- to C-terminus: L-carnitine CoA-transferase (405 aa).

CoA-binding residues include lysine 97 and arginine 104. Aspartate 169 functions as the Nucleophile in the catalytic mechanism.

Belongs to the CoA-transferase III family. CaiB subfamily. In terms of assembly, homodimer.

It localises to the cytoplasm. The catalysed reaction is crotonobetainyl-CoA + (R)-carnitine = crotonobetaine + (R)-carnitinyl-CoA. It carries out the reaction 4-(trimethylamino)butanoyl-CoA + (R)-carnitine = (R)-carnitinyl-CoA + 4-(trimethylamino)butanoate. Its pathway is amine and polyamine metabolism; carnitine metabolism. Functionally, catalyzes the reversible transfer of the CoA moiety from gamma-butyrobetainyl-CoA to L-carnitine to generate L-carnitinyl-CoA and gamma-butyrobetaine. Is also able to catalyze the reversible transfer of the CoA moiety from gamma-butyrobetainyl-CoA or L-carnitinyl-CoA to crotonobetaine to generate crotonobetainyl-CoA. This Escherichia coli O6:K15:H31 (strain 536 / UPEC) protein is L-carnitine CoA-transferase.